The primary structure comprises 475 residues: Cytosolic non-specific dipeptidase (475 aa).

Ala2 carries the N-acetylalanine modification. An N6-acetyllysine modification is found at Lys9. Phosphoserine is present on Ser58. Residue His99 participates in Mn(2+) binding. Asp101 is a catalytic residue. A Mn(2+)-binding site is contributed by Asp132. The Proton acceptor role is filled by Glu166. Residues 166–167 (EE), Asp195, and His228 each bind substrate. Residues Glu167 and Asp195 each coordinate Mn(2+). Ser299 carries the post-translational modification Phosphoserine. The substrate site is built by Thr330, Arg343, Ser417, and His445. His445 lines the Mn(2+) pocket.

This sequence belongs to the peptidase M20A family. Homodimer. It depends on Mn(2+) as a cofactor.

The protein resides in the cytoplasm. The catalysed reaction is Hydrolysis of dipeptides, preferentially hydrophobic dipeptides including prolyl amino acids.. The enzyme catalyses L-threonyl-L-threonine + H2O = 2 L-threonine. It catalyses the reaction L-threonyl-L-serine + H2O = L-threonine + L-serine. It carries out the reaction L-seryl-L-threonine + H2O = L-threonine + L-serine. The catalysed reaction is L-cysteinylglycine + H2O = L-cysteine + glycine. The enzyme catalyses (S)-lactate + L-phenylalanine = N-[(S)-lactoyl]-L-phenylalanine + H2O. Catalyzes the peptide bond hydrolysis in dipeptides, displaying a non-redundant activity toward threonyl dipeptides. Mediates threonyl dipeptide catabolism in a tissue-specific way. Has high dipeptidase activity toward cysteinylglycine, an intermediate metabolite in glutathione metabolism. Metabolizes N-lactoyl-amino acids, both through hydrolysis to form lactic acid and amino acids, as well as through their formation by reverse proteolysis. Plays a role in the regulation of cell cycle arrest and apoptosis. This is Cytosolic non-specific dipeptidase (CNDP2) from Pongo abelii (Sumatran orangutan).